The primary structure comprises 502 residues: ATP synthase subunit alpha (502 aa).

ATP is bound at residue 169 to 176 (GDRQTGKT).

It belongs to the ATPase alpha/beta chains family. As to quaternary structure, F-type ATPases have 2 components, CF(1) - the catalytic core - and CF(0) - the membrane proton channel. CF(1) has five subunits: alpha(3), beta(3), gamma(1), delta(1), epsilon(1). CF(0) has three main subunits: a(1), b(2) and c(9-12). The alpha and beta chains form an alternating ring which encloses part of the gamma chain. CF(1) is attached to CF(0) by a central stalk formed by the gamma and epsilon chains, while a peripheral stalk is formed by the delta and b chains.

Its subcellular location is the cell membrane. It catalyses the reaction ATP + H2O + 4 H(+)(in) = ADP + phosphate + 5 H(+)(out). Functionally, produces ATP from ADP in the presence of a proton gradient across the membrane. The alpha chain is a regulatory subunit. The sequence is that of ATP synthase subunit alpha from Staphylococcus aureus (strain bovine RF122 / ET3-1).